The following is a 428-amino-acid chain: Glutamine synthetase, chloroplastic (428 aa).

A chloroplast-targeting transit peptide spans 1 to 48 (MAQAVVPAMQCQVGAVRARPAAAAAAAGGRVWGVRRTGRGTSGFRVMA). The 81-residue stretch at 75-155 (IIAEYIWVGG…VMCDTYTPAG (81 aa)) folds into the GS beta-grasp domain. The segment at 95–120 (TISKPVEDPSELPKWNYDGSSTGQAP) is disordered. One can recognise a GS catalytic domain in the interval 159–428 (PTNKRNRAAQ…LAAKKLALKV (270 aa)).

It belongs to the glutamine synthetase family. As to quaternary structure, homooctamer.

Its subcellular location is the plastid. It localises to the chloroplast. It catalyses the reaction L-glutamate + NH4(+) + ATP = L-glutamine + ADP + phosphate + H(+). In terms of biological role, light-modulated chloroplastic glutamine synthetase, encoded by a nuclear gene and expressed primarily in leaves, and which is responsible for the reassimilation of the ammonia generated by photorespiration. The sequence is that of Glutamine synthetase, chloroplastic from Oryza sativa subsp. japonica (Rice).